A 355-amino-acid chain; its full sequence is F-box only protein 32 (355 aa).

The Nuclear localization signal signature appears at 62 to 67 (KKRKKD). A Nuclear export signal motif is present at residues 169-173 (LLQTL). In terms of domain architecture, F-box spans 223–271 (LTFTDLPLCLQLNIMQRLSDGRDLVSLGQVAPDLHVLSEDRLLWKKLCQ). Residues 280–295 (RKRLILSDKGQLDWKK) carry the Bipartite nuclear localization signal motif.

In terms of assembly, part of the SCF (SKP1-CUL1-F-box) E3 ubiquitin-protein ligase complex SCF(FBXO32) formed of CUL1, SKP1, RBX1 and FBXO32.

It is found in the cytoplasm. The protein localises to the nucleus. Its pathway is protein modification; protein ubiquitination. Its function is as follows. Substrate recognition component of a SCF (SKP1-CUL1-F-box protein) E3 ubiquitin-protein ligase complex which mediates the ubiquitination and subsequent proteasomal degradation of target proteins. Probably recognizes and binds to phosphorylated target proteins during skeletal muscle atrophy. Recognizes TERF1. This Sus scrofa (Pig) protein is F-box only protein 32 (FBXO32).